Here is a 376-residue protein sequence, read N- to C-terminus: TelA-like protein SE_1089 (376 aa).

The protein belongs to the TelA family.

The polypeptide is TelA-like protein SE_1089 (Staphylococcus epidermidis (strain ATCC 12228 / FDA PCI 1200)).